A 497-amino-acid polypeptide reads, in one-letter code: Galactose-1-phosphate uridylyltransferase (497 aa).

Belongs to the galactose-1-phosphate uridylyltransferase type 2 family.

It is found in the cytoplasm. The enzyme catalyses alpha-D-galactose 1-phosphate + UDP-alpha-D-glucose = alpha-D-glucose 1-phosphate + UDP-alpha-D-galactose. It functions in the pathway carbohydrate metabolism; galactose metabolism. The chain is Galactose-1-phosphate uridylyltransferase from Enterococcus faecalis (strain ATCC 700802 / V583).